Consider the following 364-residue polypeptide: Membrane-bound lytic murein transglycosylase C (364 aa).

An N-terminal signal peptide occupies residues 1–19 (MNKYKKFLPLLVLIPFLAS). Cysteine 20 carries the N-palmitoyl cysteine lipid modification. Cysteine 20 carries S-diacylglycerol cysteine lipidation.

This sequence belongs to the transglycosylase Slt family.

The protein localises to the cell outer membrane. The catalysed reaction is Exolytic cleavage of the (1-&gt;4)-beta-glycosidic linkage between N-acetylmuramic acid (MurNAc) and N-acetylglucosamine (GlcNAc) residues in peptidoglycan, from either the reducing or the non-reducing ends of the peptidoglycan chains, with concomitant formation of a 1,6-anhydrobond in the MurNAc residue.. In terms of biological role, murein-degrading enzyme. May play a role in recycling of muropeptides during cell elongation and/or cell division. The chain is Membrane-bound lytic murein transglycosylase C from Glaesserella parasuis serovar 5 (strain SH0165) (Haemophilus parasuis).